The sequence spans 173 residues: Helix-loop-helix protein lin-22 (173 aa).

Positions 21 to 34 (KKIKNKPLMEKKRR) are basic motif. The bHLH domain maps to 21–78 (KKIKNKPLMEKKRRARINKSLSQLKQILIQDEHKNSIQHSKWEKADILEMAVEYLQQL). Residues 35-78 (ARINKSLSQLKQILIQDEHKNSIQHSKWEKADILEMAVEYLQQL) are helix-loop-helix motif. The span at 83-95 (PCSLSPSTSSIST) shows a compositional bias: low complexity. Residues 83–102 (PCSLSPSTSSISTPPTPKEE) form a disordered region.

Expressed mostly in the seam (stem) cells and hypodermis (hyp7), but also to a lesser extent in the intestine.

It localises to the nucleus. In terms of biological role, probable transcription factor. During development, required for cell fate specification, probably by promoting or repressing expression of genes involved in specific cell fate. Involved in specifying lineages derived from the epidermal stem cells of the lateral ectoderm, known as seam cells. Modulates symmetric divisions of seam cells, perhaps in concert with the Wnt signaling pathway. May repress expression of homeobox genes mab-5, egl-5 and lin-39. This is Helix-loop-helix protein lin-22 from Caenorhabditis elegans.